The sequence spans 421 residues: Plant UBX domain-containing protein 5 (421 aa).

The region spanning 4 to 45 is the UBA domain; the sequence is ETNENLINSFIEITSSSREEANFFLESHTWNLDAAVSTFLDN. 2 disordered regions span residues 46 to 171 and 292 to 338; these read DAAA…MMVQ and ENFT…PSRG. Over residues 69–84 the composition is skewed to polar residues; that stretch reads QSPSQSHSPDYTPSET. Over residues 85–102 the composition is skewed to low complexity; the sequence is SPSPSRSRSASPSSRAAP. The region spanning 231–295 is the SEP domain; sequence RIMHTITFWL…DLVRRGENFT (65 aa). Low complexity predominate over residues 312–328; that stretch reads GASGSGSSSAPQASSAP. A UBX domain is found at 343-420; sequence PAAPTTSIQL…GIANAVVIQK (78 aa).

As to quaternary structure, interacts with CDC48A (non-hexameric) via its UBX domain.

The protein is Plant UBX domain-containing protein 5 of Arabidopsis thaliana (Mouse-ear cress).